The primary structure comprises 303 residues: Ribosomal RNA small subunit methyltransferase H (303 aa).

S-adenosyl-L-methionine contacts are provided by residues 32 to 34 (GGH), aspartate 52, phenylalanine 78, aspartate 99, and glutamine 106.

This sequence belongs to the methyltransferase superfamily. RsmH family.

It is found in the cytoplasm. The enzyme catalyses cytidine(1402) in 16S rRNA + S-adenosyl-L-methionine = N(4)-methylcytidine(1402) in 16S rRNA + S-adenosyl-L-homocysteine + H(+). Its function is as follows. Specifically methylates the N4 position of cytidine in position 1402 (C1402) of 16S rRNA. This is Ribosomal RNA small subunit methyltransferase H from Acinetobacter baylyi (strain ATCC 33305 / BD413 / ADP1).